Reading from the N-terminus, the 185-residue chain is Sarcoplasmic calcium-binding proteins II, V, VI, and VII (185 aa).

4 EF-hand domains span residues 5-41 (FQKQ…YKEV), 57-92 (SLED…TIAT), 102-137 (WCQN…FQLQ), and 138-173 (CADV…TSPA). Ca(2+) is bound by residues aspartate 19, asparagine 21, aspartate 23, serine 25, aspartate 30, aspartate 70, asparagine 72, aspartate 74, glutamate 81, aspartate 115, serine 117, aspartate 119, and glutamate 126.

Its function is as follows. Like parvalbumins, SCPs seem to be more abundant in fast contracting muscles, but no functional relationship can be established from this distribution. The polypeptide is Sarcoplasmic calcium-binding proteins II, V, VI, and VII (Branchiostoma lanceolatum (Common lancelet)).